The primary structure comprises 813 residues: Probable E3 ubiquitin-protein ligase hulA (813 aa).

One can recognise a C2 domain in the interval 1-109 (MGSNLPAQPN…QMGGDEMLTR (109 aa)). Disordered regions lie at residues 131–235 (NLST…GWER) and 251–351 (RTTT…YFVD). Over residues 148–167 (VQSSTSSGLVPQVAPSSSHP) the composition is skewed to polar residues. Low complexity predominate over residues 188-215 (RVPSTTRPSSTAAPASAAGAAVSNSHGS). Positions 227-260 (GRLPAGWERREDNLGRTYYVDHNTRTTTWTRPSS) constitute a WW 1 domain. Residues 251-264 (RTTTWTRPSSNYNE) are compositionally biased toward polar residues. Residues 265–292 (HAQRSQREANMQLERRAHQSRMLPEDRT) are compositionally biased toward basic and acidic residues. Over residues 293–307 (GANSPNLPESSQQAH) the composition is skewed to polar residues. Low complexity predominate over residues 322–331 (ATGATTAGTG). WW domains follow at residues 331 to 364 (GELP…DPRR) and 391 to 424 (GPLP…DPRL). In terms of domain architecture, HECT spans 480 to 813 (SASDLKKRLM…VEETLGFGQE (334 aa)). The Glycyl thioester intermediate role is filled by Cys-781.

It belongs to the RSP5/NEDD4 family. As to quaternary structure, interacts with creD.

The protein localises to the cytoplasm. The catalysed reaction is S-ubiquitinyl-[E2 ubiquitin-conjugating enzyme]-L-cysteine + [acceptor protein]-L-lysine = [E2 ubiquitin-conjugating enzyme]-L-cysteine + N(6)-ubiquitinyl-[acceptor protein]-L-lysine.. It functions in the pathway protein modification; protein ubiquitination. Its function is as follows. E3 ubiquitin-protein ligase which accepts ubiquitin from an E2 ubiquitin-conjugating enzyme in the form of a thioester and then directly transfers the ubiquitin to targeted substrates. Probably involved in the regulatory network controlling carbon source utilization. The chain is Probable E3 ubiquitin-protein ligase hulA (hulA) from Aspergillus fumigatus (strain CBS 144.89 / FGSC A1163 / CEA10) (Neosartorya fumigata).